The chain runs to 1373 residues: Capping protein, Arp2/3 and myosin-I linker protein 3 (1373 aa).

The interval 126–151 (RGNADTPEGPRDTSPNSETSTSTTHS) is disordered. Low complexity predominate over residues 138-151 (TSPNSETSTSTTHS). LRR repeat units follow at residues 242-269 (SGSLEELVLDNAGLKTDFVQKLAGVFGE), 272-299 (SCVLHALTLSHNPIEDKGFLSLSQQLLC), 333-358 (ASSLRYLDLSKNPGLLATDEANALYS), 390-417 (CSHLTYLNLARNSCSHRKGREAPPAFKQ), 422-446 (AYTLSHVNLSATRLPLEALRALLQG), 453-475 (LSDLHLDLSSCELRSAGAQALQE), 480-507 (VTCIGSLDLSDNGFDSDLLTLVPALGKN), 510-536 (LKHLFLGKNFNVKAKTLEEILHKLVQL), 541-564 (DCSLQSLSVADSRLKLRTSILINA), and 568-591 (NTCLAKVDLSGNGMEDIGAKMLSK). 2 disordered regions span residues 864–902 (RTLSDPPGGAGPGQDPSSRGRGRSHDHEETDDELGTNID) and 970–1373 (LRHQ…PGTD). The segment covering 981 to 997 (PRTTPPGPGRPSVPVPG) has biased composition (pro residues). A compositionally biased stretch (basic and acidic residues) spans 1007–1022 (RLDEGLEDFFSRRVMD). Over residues 1047 to 1062 (QKRRRRGLFHFRRPRS) the composition is skewed to basic residues. Residues 1078-1097 (LPPPPPPPPTQESPPSPDPP) show a composition bias toward pro residues. A compositionally biased stretch (low complexity) spans 1098–1108 (SLGNNSSPCWS). Positions 1218-1228 (RRAEATWHIAE) are enriched in basic and acidic residues. A compositionally biased stretch (polar residues) spans 1232-1243 (PNHSCQSPSPAS). Residues 1269 to 1278 (PIGPRPPKPV) are compositionally biased toward pro residues. The span at 1345 to 1358 (QSCDKLEPDRRRPP) shows a compositional bias: basic and acidic residues.

Belongs to the CARMIL family. In terms of tissue distribution, widely expressed, with much higher levels in fetal tissues than in adult ones. Highly expressed in newborn brain.

Its subcellular location is the cytoplasm. It is found in the cell membrane. The protein is Capping protein, Arp2/3 and myosin-I linker protein 3 (Carmil3) of Rattus norvegicus (Rat).